A 311-amino-acid chain; its full sequence is tRNA(Ile)-lysidine synthase (311 aa).

31–36 (SGGKDS) is an ATP binding site.

Belongs to the tRNA(Ile)-lysidine synthase family.

Its subcellular location is the cytoplasm. The catalysed reaction is cytidine(34) in tRNA(Ile2) + L-lysine + ATP = lysidine(34) in tRNA(Ile2) + AMP + diphosphate + H(+). Functionally, ligates lysine onto the cytidine present at position 34 of the AUA codon-specific tRNA(Ile) that contains the anticodon CAU, in an ATP-dependent manner. Cytidine is converted to lysidine, thus changing the amino acid specificity of the tRNA from methionine to isoleucine. The sequence is that of tRNA(Ile)-lysidine synthase from Petrotoga mobilis (strain DSM 10674 / SJ95).